We begin with the raw amino-acid sequence, 333 residues long: NADH dehydrogenase (ubiquinone) complex I, assembly factor 6 (333 aa).

The transit peptide at 1–44 (MATSMLGSVPGPRPFGLAGLFRRRPPRDPWERVRRLPRLSAVRR) directs the protein to the mitochondrion.

Belongs to the NDUFAF6 family.

It localises to the mitochondrion inner membrane. Its function is as follows. Involved in the assembly of mitochondrial NADH:ubiquinone oxidoreductase complex (complex I) at early stages. May play a role in the biogenesis of complex I subunit MT-ND1. The sequence is that of NADH dehydrogenase (ubiquinone) complex I, assembly factor 6 (Ndufaf6) from Rattus norvegicus (Rat).